We begin with the raw amino-acid sequence, 329 residues long: Beta-tectorin (329 aa).

An N-terminal signal peptide occupies residues 1-17 (MVAVTVYLMVILAQAFA). Residues 19-287 (PCTPNKADVI…VTCDKRKQRM (269 aa)) form the ZP domain. 4 N-linked (GlcNAc...) asparagine glycosylation sites follow: asparagine 80, asparagine 104, asparagine 116, and asparagine 145. Residues cysteine 204 and cysteine 264 are joined by a disulfide bond. A lipid anchor (GPI-anchor amidated glycine) is attached at glycine 304. The propeptide at 305–329 (LSRFYMLSDVIFHLLFAIGFCAILL) is removed in mature form.

As to quaternary structure, may form homomeric filament after self-association or heteromeric filament after association with alpha-tectorin. The N-terminus is blocked. Post-translationally, N-glycosylated. In terms of processing, the presence of a hydrophobic C-terminus preceded by a potential cleavage site strongly suggests that tectorins are synthesized as glycosylphosphatidylinositol-linked, membrane-bound precursors. Tectorins are targeted to the apical surface of the inner ear epithelia by the lipid and proteolytically released into the extracellular compartment. As to expression, exclusively expressed in the inner ear, where it is found in basilar papilla, clear cells, supporting cells, cuboidal cells and the lagena macula.

The protein resides in the cell membrane. It is found in the secreted. It localises to the extracellular space. Its subcellular location is the extracellular matrix. One of the major non-collagenous components of the tectorial membrane. The tectorial membrane is an extracellular matrix of the inner ear that covers the neuroepithelium of the cochlea and contacts the stereocilia bundles of specialized sensory hair cells. Sound induces movement of these hair cells relative to the tectorial membrane, deflects the stereocilia and leads to fluctuations in hair-cell membrane potential, transducing sound into electrical signals. The chain is Beta-tectorin (TECTB) from Gallus gallus (Chicken).